A 589-amino-acid polypeptide reads, in one-letter code: Mitogen-activated protein kinase 8 (589 aa).

The interval 18-56 (RPSSSSSSSSSNNNNNNHEQPIFNSSSFSSSSNPNHSAN) is disordered. Low complexity-rich tracts occupy residues 20–34 (SSSSSSSSSNNNNNN) and 41–56 (NSSSFSSSSNPNHSAN). Residues 104 to 395 (YQIQEVVGKG…AEDALADPYF (292 aa)) enclose the Protein kinase domain. Residues 110-118 (VGKGSYGVV) and K133 each bind ATP. D230 acts as the Proton acceptor in catalysis. T266 is modified (phosphothreonine). Positions 266 to 268 (TDY) match the TXY motif. Residue Y268 is modified to Phosphotyrosine. T271 is subject to Phosphothreonine. The interval 474–589 (NQGKPGAAGG…TDKVASLHNS (116 aa)) is disordered.

Belongs to the protein kinase superfamily. CMGC Ser/Thr protein kinase family. MAP kinase subfamily. In terms of assembly, interacts with CAM3, CAM4 and CAM7 in an calcium-dependent manner. Dually phosphorylated on Thr-266 and Tyr-268, which activates the enzyme. Autophosphorylated. Ubiquitous.

The catalysed reaction is L-seryl-[protein] + ATP = O-phospho-L-seryl-[protein] + ADP + H(+). The enzyme catalyses L-threonyl-[protein] + ATP = O-phospho-L-threonyl-[protein] + ADP + H(+). Its activity is regulated as follows. Activated by threonine and tyrosine phosphorylation. Activated by two independent mechanisms, the binding of CAMs in a calcium-dependent manner and the phosphorylation by MAP kinase kinase MKK3. Activated in response to mechanical wounding, hydrogen peroxide and jasmonic acid (JA). Its function is as follows. MKK3-MPK8 and CAMs-MPK8 modules negatively regulates ROS accumulation through controlling expression of the RBOHD gene during wounding. This is Mitogen-activated protein kinase 8 (MPK8) from Arabidopsis thaliana (Mouse-ear cress).